Here is a 156-residue protein sequence, read N- to C-terminus: Large ribosomal subunit protein uL15 (156 aa).

Positions 25–49 are disordered; that stretch reads RGIGCGKGKTSGRGHKGQKARSGTS. Residues 34–43 show a composition bias toward basic residues; that stretch reads TSGRGHKGQK.

Belongs to the universal ribosomal protein uL15 family. Part of the 50S ribosomal subunit.

In terms of biological role, binds to the 23S rRNA. The protein is Large ribosomal subunit protein uL15 of Wolbachia sp. subsp. Brugia malayi (strain TRS).